The sequence spans 29 residues: Dermaseptin-J8 (29 aa).

Expressed by the skin glands.

It localises to the secreted. Functionally, has antimicrobial activity. This Phasmahyla jandaia (Jandaia leaf frog) protein is Dermaseptin-J8.